Consider the following 201-residue polypeptide: Peptidyl-tRNA hydrolase (201 aa).

Tyrosine 17 serves as a coordination point for tRNA. Catalysis depends on histidine 22, which acts as the Proton acceptor. TRNA is bound by residues phenylalanine 76, asparagine 78, and asparagine 124.

Belongs to the PTH family. In terms of assembly, monomer.

It localises to the cytoplasm. The catalysed reaction is an N-acyl-L-alpha-aminoacyl-tRNA + H2O = an N-acyl-L-amino acid + a tRNA + H(+). Its function is as follows. Hydrolyzes ribosome-free peptidyl-tRNAs (with 1 or more amino acids incorporated), which drop off the ribosome during protein synthesis, or as a result of ribosome stalling. In terms of biological role, catalyzes the release of premature peptidyl moieties from peptidyl-tRNA molecules trapped in stalled 50S ribosomal subunits, and thus maintains levels of free tRNAs and 50S ribosomes. This chain is Peptidyl-tRNA hydrolase, found in Oleidesulfovibrio alaskensis (strain ATCC BAA-1058 / DSM 17464 / G20) (Desulfovibrio alaskensis).